We begin with the raw amino-acid sequence, 142 residues long: Large ribosomal subunit protein uL11 (142 aa).

This sequence belongs to the universal ribosomal protein uL11 family. Part of the ribosomal stalk of the 50S ribosomal subunit. Interacts with L10 and the large rRNA to form the base of the stalk. L10 forms an elongated spine to which L12 dimers bind in a sequential fashion forming a multimeric L10(L12)X complex. One or more lysine residues are methylated.

Forms part of the ribosomal stalk which helps the ribosome interact with GTP-bound translation factors. This is Large ribosomal subunit protein uL11 from Shewanella baltica (strain OS223).